A 462-amino-acid polypeptide reads, in one-letter code: Glycerol-3-phosphate acyltransferase ATS12, chloroplastic (462 aa).

Residues 1–82 (MFILSSSSST…DKESAQSAAT (82 aa)) constitute a chloroplast transit peptide. Positions 233–238 (HQTEAD) match the HXXXXD motif motif.

Belongs to the GPAT/DAPAT family.

It is found in the plastid. The protein localises to the chloroplast stroma. The catalysed reaction is a fatty acyl-[ACP] + sn-glycerol 3-phosphate = a 1-acyl-sn-glycero-3-phosphate + holo-[ACP]. The enzyme catalyses sn-glycerol 3-phosphate + an acyl-CoA = a 1-acyl-sn-glycero-3-phosphate + CoA. It participates in phospholipid metabolism; CDP-diacylglycerol biosynthesis; CDP-diacylglycerol from sn-glycerol 3-phosphate: step 1/3. Esterifies the acyl-group from acyl-acyl carrier proteins (acyl-ACPs) to the sn-1 position of glycerol-3-phosphate. The physiological acyl donors in chloroplasts are acyl-ACPs, but acyl-CoAs are used as artificial donor for in vitro reactions. The enzyme from chilling-resistant plants discriminates against non-fluid palmitic acid and selects oleic acid whereas the enzyme from sensitive plants accepts both fatty acids. Squash is chilling-sensitive. Does not seem to discriminate between the acyl-ACP thioesters 18:1-ACP, 18:0-ACP and 16:0-ACP. Exhibits higher selectivity for 16:0-CoA than 18:1-CoA in vitro. The protein is Glycerol-3-phosphate acyltransferase ATS12, chloroplastic of Cucurbita moschata (Winter crookneck squash).